The primary structure comprises 191 residues: Ribonuclease HII (191 aa).

Residues 7–191 (ILMAGVDEVG…YSPVADLISK (185 aa)) form the RNase H type-2 domain. A divalent metal cation is bound by residues Asp13, Glu14, and Asp103.

It belongs to the RNase HII family. Mn(2+) serves as cofactor. It depends on Mg(2+) as a cofactor.

It is found in the cytoplasm. The enzyme catalyses Endonucleolytic cleavage to 5'-phosphomonoester.. Functionally, endonuclease that specifically degrades the RNA of RNA-DNA hybrids. This chain is Ribonuclease HII, found in Legionella pneumophila (strain Corby).